A 369-amino-acid chain; its full sequence is Phenylalanine--tRNA ligase alpha subunit (369 aa).

Residue glutamate 269 participates in Mg(2+) binding.

It belongs to the class-II aminoacyl-tRNA synthetase family. Phe-tRNA synthetase alpha subunit type 1 subfamily. As to quaternary structure, tetramer of two alpha and two beta subunits. It depends on Mg(2+) as a cofactor.

It is found in the cytoplasm. It carries out the reaction tRNA(Phe) + L-phenylalanine + ATP = L-phenylalanyl-tRNA(Phe) + AMP + diphosphate + H(+). This chain is Phenylalanine--tRNA ligase alpha subunit, found in Brucella anthropi (strain ATCC 49188 / DSM 6882 / CCUG 24695 / JCM 21032 / LMG 3331 / NBRC 15819 / NCTC 12168 / Alc 37) (Ochrobactrum anthropi).